The chain runs to 441 residues: Methylenetetrahydrofolate--tRNA-(uracil-5-)-methyltransferase TrmFO (441 aa).

7–12 (GAGLSG) provides a ligand contact to FAD.

The protein belongs to the MnmG family. TrmFO subfamily. FAD serves as cofactor.

Its subcellular location is the cytoplasm. It carries out the reaction uridine(54) in tRNA + (6R)-5,10-methylene-5,6,7,8-tetrahydrofolate + NADH + H(+) = 5-methyluridine(54) in tRNA + (6S)-5,6,7,8-tetrahydrofolate + NAD(+). It catalyses the reaction uridine(54) in tRNA + (6R)-5,10-methylene-5,6,7,8-tetrahydrofolate + NADPH + H(+) = 5-methyluridine(54) in tRNA + (6S)-5,6,7,8-tetrahydrofolate + NADP(+). Functionally, catalyzes the folate-dependent formation of 5-methyl-uridine at position 54 (M-5-U54) in all tRNAs. This is Methylenetetrahydrofolate--tRNA-(uracil-5-)-methyltransferase TrmFO from Pseudothermotoga lettingae (strain ATCC BAA-301 / DSM 14385 / NBRC 107922 / TMO) (Thermotoga lettingae).